The following is a 251-amino-acid chain: Hydroxyacylglutathione hydrolase (251 aa).

Residues His53, His55, Asp57, His58, His110, Asp127, and His165 each coordinate Zn(2+).

The protein belongs to the metallo-beta-lactamase superfamily. Glyoxalase II family. Monomer. Zn(2+) is required as a cofactor.

The enzyme catalyses an S-(2-hydroxyacyl)glutathione + H2O = a 2-hydroxy carboxylate + glutathione + H(+). Its pathway is secondary metabolite metabolism; methylglyoxal degradation; (R)-lactate from methylglyoxal: step 2/2. In terms of biological role, thiolesterase that catalyzes the hydrolysis of S-D-lactoyl-glutathione to form glutathione and D-lactic acid. The protein is Hydroxyacylglutathione hydrolase of Edwardsiella ictaluri (strain 93-146).